We begin with the raw amino-acid sequence, 233 residues long: Protein Thf1 (233 aa).

Positions 183–204 (DKFSKDLELYRSNLDKMTQALA) form a coiled coil. The segment at 212–233 (ADRKKREQRQQQASTPVAPPNE) is disordered.

It belongs to the THF1 family.

Functionally, may be involved in photosynthetic membrane biogenesis. The polypeptide is Protein Thf1 (Nostoc sp. (strain PCC 7120 / SAG 25.82 / UTEX 2576)).